Here is a 168-residue protein sequence, read N- to C-terminus: GPI-anchored protein LLG1 (168 aa).

An N-terminal signal peptide occupies residues 1 to 23; it reads MELLSRALFFFLLLSVLSSFSSS. The N-linked (GlcNAc...) asparagine glycan is linked to N57. The GPI-anchor amidated asparagine moiety is linked to residue N144. Positions 145–168 are cleaved as a propeptide — removed in mature form; the sequence is AATTSSSRLWLTVSAALLVFVKLF.

In terms of assembly, interacts with FER. Expressed in pollen, pollen tubes, sporophytic pistil tissues, in the early stages of female gametophyte development, and in unfertilized, mature ovules. Expressed in roots, lateral roots, shoots, cotyledons, petioles, developing leaves and anther filaments.

It localises to the cell membrane. Component of the FER-regulated Rho GTPase signaling complex. Acts as a chaperone and coreceptor for FER. Required for localization of FER to the plasma membrane. The chain is GPI-anchored protein LLG1 from Arabidopsis thaliana (Mouse-ear cress).